A 586-amino-acid polypeptide reads, in one-letter code: Kinesin-like protein KIF25 (586 aa).

The stretch at 10–94 (SFWEQRTRQL…VIQKLNQDIQ (85 aa)) forms a coiled coil. Residues 173-565 (NIRVHCRIRP…LGFGIRARQV (393 aa)) form the Kinesin motor domain. 267–274 (GQTGSGKS) contacts ATP. Disordered stretches follow at residues 417-460 (TADQ…AGRA) and 564-586 (QVQR…RRPD).

The protein belongs to the TRAFAC class myosin-kinesin ATPase superfamily. Kinesin family. Homotetramer.

It localises to the cytoplasm. The protein localises to the cytoskeleton. Its subcellular location is the microtubule organizing center. The protein resides in the centrosome. Minus-end microtubule-dependent motor protein. Acts as a negative regulator of centrosome separation required to prevent premature centrosome separation during interphase. Required to maintain a centered nucleus to ensure that the spindle is stably oriented at the onset of mitosis. May also act as a negative regulator of amino acid starvation-induced autophagy. This Macaca fascicularis (Crab-eating macaque) protein is Kinesin-like protein KIF25.